The primary structure comprises 52 residues: Large ribosomal subunit protein bL32c (52 aa).

This sequence belongs to the bacterial ribosomal protein bL32 family.

The protein localises to the plastid. It is found in the chloroplast. The protein is Large ribosomal subunit protein bL32c of Olimarabidopsis pumila (Dwarf rocket).